The sequence spans 236 residues: Biosynthetic peptidoglycan transglycosylase (236 aa).

The helical transmembrane segment at 20 to 40 threads the bilayer; that stretch reads GLVVAAVLALIPTMLTFLYLP.

This sequence belongs to the glycosyltransferase 51 family.

It is found in the cell inner membrane. The enzyme catalyses [GlcNAc-(1-&gt;4)-Mur2Ac(oyl-L-Ala-gamma-D-Glu-L-Lys-D-Ala-D-Ala)](n)-di-trans,octa-cis-undecaprenyl diphosphate + beta-D-GlcNAc-(1-&gt;4)-Mur2Ac(oyl-L-Ala-gamma-D-Glu-L-Lys-D-Ala-D-Ala)-di-trans,octa-cis-undecaprenyl diphosphate = [GlcNAc-(1-&gt;4)-Mur2Ac(oyl-L-Ala-gamma-D-Glu-L-Lys-D-Ala-D-Ala)](n+1)-di-trans,octa-cis-undecaprenyl diphosphate + di-trans,octa-cis-undecaprenyl diphosphate + H(+). It functions in the pathway cell wall biogenesis; peptidoglycan biosynthesis. Its function is as follows. Peptidoglycan polymerase that catalyzes glycan chain elongation from lipid-linked precursors. This is Biosynthetic peptidoglycan transglycosylase from Mesorhizobium japonicum (strain LMG 29417 / CECT 9101 / MAFF 303099) (Mesorhizobium loti (strain MAFF 303099)).